The sequence spans 37 residues: Lambda-hexatoxin-Hv1c (37 aa).

Cystine bridges form between cysteine 3–cysteine 17, cysteine 10–cysteine 22, cysteine 13–cysteine 14, and cysteine 16–cysteine 32.

The protein belongs to the neurotoxin 11 (kappa toxin) family. In terms of tissue distribution, expressed by the venom gland.

The protein localises to the secreted. This excitatory toxin inhibits insect calcium-activated potassium (KCa) channels (Slo-type). Pan-neuronal expression in Drosophila is lethal but flies engineered to express the toxin only in clock neurons have defects in circadian rhythm but a normal lifespan. The protein is Lambda-hexatoxin-Hv1c of Hadronyche versuta (Blue mountains funnel-web spider).